The following is a 423-amino-acid chain: Diaminobutyrate--2-oxoglutarate transaminase (423 aa).

K271 carries the N6-(pyridoxal phosphate)lysine modification.

The protein belongs to the class-III pyridoxal-phosphate-dependent aminotransferase family. Pyridoxal 5'-phosphate is required as a cofactor.

It catalyses the reaction L-2,4-diaminobutanoate + 2-oxoglutarate = L-aspartate 4-semialdehyde + L-glutamate. It participates in amine and polyamine biosynthesis; ectoine biosynthesis; L-ectoine from L-aspartate 4-semialdehyde: step 1/3. Catalyzes reversively the conversion of L-aspartate beta-semialdehyde (ASA) to L-2,4-diaminobutyrate (DABA) by transamination with L-glutamate. The chain is Diaminobutyrate--2-oxoglutarate transaminase (ectB) from Streptomyces avermitilis (strain ATCC 31267 / DSM 46492 / JCM 5070 / NBRC 14893 / NCIMB 12804 / NRRL 8165 / MA-4680).